A 130-amino-acid chain; its full sequence is Small ribosomal subunit protein uS8 (130 aa).

The protein belongs to the universal ribosomal protein uS8 family.

This Paracentrotus lividus (Common sea urchin) protein is Small ribosomal subunit protein uS8 (RPS15A).